A 162-amino-acid polypeptide reads, in one-letter code: Sorting nexin-3 (162 aa).

Residues 1-23 (MPREFKSFGSTEKSLLSKGHGEP) are disordered. The PX domain maps to 38-161 (IEVHNPKTHI…VRFIEAEKFV (124 aa)). Residues arginine 81, serine 83, lysine 112, and arginine 127 each contribute to the a 1,2-diacyl-sn-glycero-3-phospho-(1D-myo-inositol-3-phosphate) site.

This sequence belongs to the sorting nexin family. In terms of assembly, monomer. Interacts with RBD2, YIF1, YIP1 and YIP5.

The protein localises to the cytoplasm. It localises to the golgi apparatus membrane. It is found in the prevacuolar compartment membrane. Its function is as follows. Required for retention of late Golgi membrane proteins. Component of the retrieval machinery that functions by direct interaction with the cytosolic tails of certain TGN membrane proteins during the sorting/budding process at the prevacuolar compartment. Binds phosphatidylinositol 3-phosphate (PtdIns(P3)). In Saccharomyces cerevisiae (strain ATCC 204508 / S288c) (Baker's yeast), this protein is Sorting nexin-3 (SNX3).